We begin with the raw amino-acid sequence, 105 residues long: Integration host factor (105 aa).

The short motif at L64–K71 is the H2TH motif, binds DNA element. Positions A82–Q94 are lid, binds DNA.

The protein belongs to the actinobacterial IHF (aIHF) family. Binds DNA as a monomer. As to quaternary structure, (Microbial infection) Forms a complex with L5 Int and attP DNA. The complex binds attB to form products.

The protein resides in the cytoplasm. It is found in the nucleoid. Functionally, a nucleoid-associated protein (NAP) that binds DNA without any sequence specificity. Compacts DNA. Binds along the whole chromosome in a dynamic manner, has equal affinity for the oriC site, attB and a randon 62% GC-rich sequence. Plays a role in transcription regulation. In terms of biological role, (Microbial infection) Stimulates temperate Mycobacterium phage L5 Int-mediated recombination in vitro using supercoiled attP (phage attachment site) DNA, linear attB DNA (bacterial attachment site) and L5 integrase (L5 Int or Int-L5, AC P22884). mIHF acts on L5 Int to stimulate formation of a specific intasome complex. mIHF probably stabilizes a sharp bend in the DNA during phage integration. The polypeptide is Integration host factor (Mycolicibacterium smegmatis (strain ATCC 700084 / mc(2)155) (Mycobacterium smegmatis)).